The chain runs to 859 residues: Leucine--tRNA ligase (859 aa).

The 'HIGH' region signature appears at P42–H52. The short motif at K618 to S622 is the 'KMSKS' region element. An ATP-binding site is contributed by K621.

Belongs to the class-I aminoacyl-tRNA synthetase family.

The protein localises to the cytoplasm. The enzyme catalyses tRNA(Leu) + L-leucine + ATP = L-leucyl-tRNA(Leu) + AMP + diphosphate. This Shewanella woodyi (strain ATCC 51908 / MS32) protein is Leucine--tRNA ligase.